The following is a 543-amino-acid chain: Glucose-6-phosphate isomerase (543 aa).

Glu351 acts as the Proton donor in catalysis. Active-site residues include His382 and Lys511.

It belongs to the GPI family.

The protein localises to the cytoplasm. It carries out the reaction alpha-D-glucose 6-phosphate = beta-D-fructose 6-phosphate. Its pathway is carbohydrate biosynthesis; gluconeogenesis. The protein operates within carbohydrate degradation; glycolysis; D-glyceraldehyde 3-phosphate and glycerone phosphate from D-glucose: step 2/4. Catalyzes the reversible isomerization of glucose-6-phosphate to fructose-6-phosphate. The sequence is that of Glucose-6-phosphate isomerase from Hydrogenovibrio crunogenus (strain DSM 25203 / XCL-2) (Thiomicrospira crunogena).